The following is a 407-amino-acid chain: Endo-1,4-beta-xylanase D (407 aa).

A signal peptide spans Met1 to Ala19. The GH10 domain maps to Gln20–Gly333. Asn118 is a glycosylation site (N-linked (GlcNAc...) asparagine). The active-site Proton donor is the Glu148. Glu255 acts as the Nucleophile in catalysis. Cys283 and Cys289 are disulfide-bonded. Positions Gly337 to Ala364 are disordered. The CBM1 domain maps to Ser371–Leu407.

Belongs to the glycosyl hydrolase 10 (cellulase F) family.

The protein resides in the secreted. The enzyme catalyses Endohydrolysis of (1-&gt;4)-beta-D-xylosidic linkages in xylans.. Its pathway is glycan degradation; xylan degradation. Its activity is regulated as follows. Inhibited by wheat xylanase inhibiting protein I (XIP-I). Functionally, endo-1,4-beta-xylanase involved in the hydrolysis of xylan, a major structural heterogeneous polysaccharide found in plant biomass representing the second most abundant polysaccharide in the biosphere, after cellulose. Shows an endo-mode of action on xylan forming mainly xylobiose and short-chain xylooligosaccharides (XOS). This is Endo-1,4-beta-xylanase D (xynD) from Talaromyces funiculosus (Fruitlet core rot fungus).